Consider the following 179-residue polypeptide: UPF0303 protein P4H10.12 (179 aa).

It belongs to the UPF0303 family.

This is UPF0303 protein P4H10.12 from Schizosaccharomyces pombe (strain 972 / ATCC 24843) (Fission yeast).